Reading from the N-terminus, the 425-residue chain is Tyrosine--tRNA ligase (425 aa).

An L-tyrosine-binding site is contributed by Y37. The short motif at 42 to 51 (PTADSLHLGH) is the 'HIGH' region element. 2 residues coordinate L-tyrosine: Y175 and Q179. Positions 235–239 (KFGKT) match the 'KMSKS' region motif. K238 lines the ATP pocket. Residues 357 to 414 (ADLQQALVSAELVPSRGQARTMISSNAVTINGEKQANPEYIFSASDRLFDRYTLLRRG) form the S4 RNA-binding domain.

The protein belongs to the class-I aminoacyl-tRNA synthetase family. TyrS type 1 subfamily. In terms of assembly, homodimer.

Its subcellular location is the cytoplasm. It carries out the reaction tRNA(Tyr) + L-tyrosine + ATP = L-tyrosyl-tRNA(Tyr) + AMP + diphosphate + H(+). Functionally, catalyzes the attachment of tyrosine to tRNA(Tyr) in a two-step reaction: tyrosine is first activated by ATP to form Tyr-AMP and then transferred to the acceptor end of tRNA(Tyr). In Pectobacterium atrosepticum (strain SCRI 1043 / ATCC BAA-672) (Erwinia carotovora subsp. atroseptica), this protein is Tyrosine--tRNA ligase.